The chain runs to 469 residues: Glutamate--tRNA ligase (469 aa).

The 'HIGH' region motif lies at 11–21 (PSPTGFIHLGN). The span at 118–131 (GEKPRYDGTWRPEP) shows a compositional bias: basic and acidic residues. Residues 118–139 (GEKPRYDGTWRPEPGKVLPEPP) form a disordered region. A 'KMSKS' region motif is present at residues 243-247 (KMSKR). Lys246 lines the ATP pocket.

It belongs to the class-I aminoacyl-tRNA synthetase family. Glutamate--tRNA ligase type 1 subfamily. Monomer.

Its subcellular location is the cytoplasm. The catalysed reaction is tRNA(Glu) + L-glutamate + ATP = L-glutamyl-tRNA(Glu) + AMP + diphosphate. Functionally, catalyzes the attachment of glutamate to tRNA(Glu) in a two-step reaction: glutamate is first activated by ATP to form Glu-AMP and then transferred to the acceptor end of tRNA(Glu). The sequence is that of Glutamate--tRNA ligase from Burkholderia pseudomallei (strain 668).